A 446-amino-acid polypeptide reads, in one-letter code: Immunoglobulin heavy constant gamma 3 (446 aa).

Residues 1–98 (ASTKGPSVFP…PSNTKVDKRV (98 aa)) are CH1. Residues 1–397 (ASTKGPSVFP…DGELDGLWTT (397 aa)) lie on the Extracellular side of the membrane. In terms of domain architecture, Ig-like 1 spans 6-99 (PSVFPLAPCS…SNTKVDKRVE (94 aa)). Cysteine 27 and cysteine 83 form a disulfide bridge. Residues 99–160 (ELKTPLGDTT…DTPPPCPRCP (62 aa)) are hinge. Repeats lie at residues 116–130 (EPKS…PRCP), 131–145 (EPKS…PRCP), and 146–160 (EPKS…PRCP). O-linked (GalNAc...) threonine glycosylation is found at threonine 122, threonine 137, and threonine 152. Residues 161 to 270 (APELLGGPSV…PIEKTISKTK (110 aa)) are CH2. Ig-like domains follow at residues 168-267 (PSVF…KTIS) and 276-372 (PQVY…KSLS). Cystine bridges form between cysteine 191–cysteine 251 and cysteine 297–cysteine 355. N-linked (GlcNAc...) asparagine glycans are attached at residues asparagine 227 and asparagine 322. The interval 271 to 376 (GQPREPQVYT…TQKSLSLSPE (106 aa)) is CH3. The helical transmembrane segment at 398–418 (ITIFITLFLLSVCYSATVTFF) threads the bilayer. Residues 419–446 (KVKWIFSSVVDLKQTIIPDYRNMIGQGA) lie on the Cytoplasmic side of the membrane.

As to quaternary structure, immunoglobulins are composed of two identical heavy chains and two identical light chains; disulfide-linked. Post-translationally, N-linked glycans at Asn-322 are noncore fucosylated and the vast majority are diantennary species with a bisecting GlcNAc. Among them the most dominant glycans are HexNAc5Hex4, HexNAc5Hex5, and HexNAc5Hex5Sia1. In terms of processing, N-linked glycans at Asn-227 are diantennary core fucosylated structures without bisecting GlcNAc (HexNAc4Hex4Fuc1, HexNAc4Hex5Fuc1, and HexNAc4Hex5Fuc1Sia1). Glycosylation on Asn-227 is required for interaction with Fc receptors and ability to activate the complement pathway. (Microbial infection) Deglycosylation on Asn-227 by S.pyogenes EndoS or Endos2 endoglucosidases prevents interaction between immunoglobulin-gamma (IgG) and Fc receptors, impairing ability to activate the complement pathway. Post-translationally, O-linked glycans are non-, mono- and disialylated core 1-type O-glycans.

It is found in the secreted. The protein localises to the cell membrane. Its function is as follows. Constant region of immunoglobulin heavy chains. Immunoglobulins, also known as antibodies, are membrane-bound or secreted glycoproteins produced by B lymphocytes. In the recognition phase of humoral immunity, the membrane-bound immunoglobulins serve as receptors which, upon binding of a specific antigen, trigger the clonal expansion and differentiation of B lymphocytes into immunoglobulins-secreting plasma cells. Secreted immunoglobulins mediate the effector phase of humoral immunity, which results in the elimination of bound antigens. The antigen binding site is formed by the variable domain of one heavy chain, together with that of its associated light chain. Thus, each immunoglobulin has two antigen binding sites with remarkable affinity for a particular antigen. The variable domains are assembled by a process called V-(D)-J rearrangement and can then be subjected to somatic hypermutations which, after exposure to antigen and selection, allow affinity maturation for a particular antigen. In Homo sapiens (Human), this protein is Immunoglobulin heavy constant gamma 3.